A 179-amino-acid polypeptide reads, in one-letter code: Large ribosomal subunit protein uL6 (179 aa).

The protein belongs to the universal ribosomal protein uL6 family. As to quaternary structure, part of the 50S ribosomal subunit.

In terms of biological role, this protein binds to the 23S rRNA, and is important in its secondary structure. It is located near the subunit interface in the base of the L7/L12 stalk, and near the tRNA binding site of the peptidyltransferase center. This chain is Large ribosomal subunit protein uL6, found in Nocardia farcinica (strain IFM 10152).